The chain runs to 1013 residues: Putative helicase mov-10-B.1 (1013 aa).

Polar residues-rich tracts occupy residues 91–103 (QWSRPYRSQQNHA) and 113–123 (RPSTTRVSDPS). Positions 91–129 (QWSRPYRSQQNHATPHLNDAISRPSTTRVSDPSSVPEPE) are disordered. 550 to 557 (GPPGTGKT) provides a ligand contact to ATP. The short motif at 672-675 (DEAG) is the DEAG box element.

This sequence belongs to the DNA2/NAM7 helicase family. SDE3 subfamily.

The protein resides in the cytoplasm. It localises to the P-body. The enzyme catalyses ATP + H2O = ADP + phosphate + H(+). Probable RNA helicase. Required for RNA-mediated gene silencing by the RNA-induced silencing complex (RISC). Required for both miRNA-mediated translational repression and miRNA-mediated cleavage of complementary mRNAs by RISC. This chain is Putative helicase mov-10-B.1 (mov10b.1), found in Danio rerio (Zebrafish).